Consider the following 674-residue polypeptide: ATP-dependent DNA helicase Rep (674 aa).

The 280-residue stretch at 1-280 (MRLNPGQQHA…IKLEQNYRSS (280 aa)) folds into the UvrD-like helicase ATP-binding domain. ATP contacts are provided by residues 22 to 29 (AGAGSGKT) and Arg-278. Positions 281 to 562 (GRILKAANIL…QLMTLHASKG (282 aa)) constitute a UvrD-like helicase C-terminal domain.

This sequence belongs to the helicase family. UvrD subfamily. In terms of assembly, homodimer.

The catalysed reaction is Couples ATP hydrolysis with the unwinding of duplex DNA by translocating in the 3'-5' direction.. It catalyses the reaction ATP + H2O = ADP + phosphate + H(+). Rep helicase is a single-stranded DNA-dependent ATPase involved in DNA replication; it can initiate unwinding at a nick in the DNA. It binds to the single-stranded DNA and acts in a progressive fashion along the DNA in the 3' to 5' direction. The chain is ATP-dependent DNA helicase Rep from Salmonella typhimurium (strain LT2 / SGSC1412 / ATCC 700720).